A 132-amino-acid chain; its full sequence is Small ribosomal subunit protein uS8 (132 aa).

This sequence belongs to the universal ribosomal protein uS8 family. As to quaternary structure, part of the 30S ribosomal subunit. Contacts proteins S5 and S12.

In terms of biological role, one of the primary rRNA binding proteins, it binds directly to 16S rRNA central domain where it helps coordinate assembly of the platform of the 30S subunit. The chain is Small ribosomal subunit protein uS8 from Clostridium botulinum (strain ATCC 19397 / Type A).